A 310-amino-acid chain; its full sequence is Aspartate carbamoyltransferase catalytic subunit 1 (310 aa).

Carbamoyl phosphate contacts are provided by Arg55 and Thr56. Residue Lys85 participates in L-aspartate binding. 3 residues coordinate carbamoyl phosphate: Arg106, His134, and Gln137. L-aspartate-binding residues include Arg167 and Arg228. Carbamoyl phosphate-binding residues include Leu266 and Pro267.

Belongs to the aspartate/ornithine carbamoyltransferase superfamily. ATCase family. Heterododecamer (2C3:3R2) of six catalytic PyrB chains organized as two trimers (C3), and six regulatory PyrI chains organized as three dimers (R2).

It carries out the reaction carbamoyl phosphate + L-aspartate = N-carbamoyl-L-aspartate + phosphate + H(+). It participates in pyrimidine metabolism; UMP biosynthesis via de novo pathway; (S)-dihydroorotate from bicarbonate: step 2/3. Catalyzes the condensation of carbamoyl phosphate and aspartate to form carbamoyl aspartate and inorganic phosphate, the committed step in the de novo pyrimidine nucleotide biosynthesis pathway. This chain is Aspartate carbamoyltransferase catalytic subunit 1, found in Shewanella halifaxensis (strain HAW-EB4).